The primary structure comprises 174 residues: Ribosome maturation factor RimM (174 aa).

The 80-residue stretch at 95–174 (DDEFYWRDLI…QIQVEWPSDF (80 aa)) folds into the PRC barrel domain.

The protein belongs to the RimM family. As to quaternary structure, binds ribosomal protein uS19.

The protein resides in the cytoplasm. Its function is as follows. An accessory protein needed during the final step in the assembly of 30S ribosomal subunit, possibly for assembly of the head region. Essential for efficient processing of 16S rRNA. May be needed both before and after RbfA during the maturation of 16S rRNA. It has affinity for free ribosomal 30S subunits but not for 70S ribosomes. In Idiomarina loihiensis (strain ATCC BAA-735 / DSM 15497 / L2-TR), this protein is Ribosome maturation factor RimM.